Consider the following 234-residue polypeptide: Orotidine 5'-phosphate decarboxylase (234 aa).

Residues Asp17, Lys38, 65 to 74, Thr122, Arg184, Gln193, Gly213, and Arg214 each bind substrate; that span reads DLKLHDIPNT. Lys67 acts as the Proton donor in catalysis.

This sequence belongs to the OMP decarboxylase family. Type 1 subfamily. Homodimer.

The catalysed reaction is orotidine 5'-phosphate + H(+) = UMP + CO2. Its pathway is pyrimidine metabolism; UMP biosynthesis via de novo pathway; UMP from orotate: step 2/2. In terms of biological role, catalyzes the decarboxylation of orotidine 5'-monophosphate (OMP) to uridine 5'-monophosphate (UMP). The chain is Orotidine 5'-phosphate decarboxylase from Thermosynechococcus vestitus (strain NIES-2133 / IAM M-273 / BP-1).